Consider the following 217-residue polypeptide: uncharacterized protein (217 aa).

The N-terminal stretch at 1 to 24 (MRYTVLIALQGALLLLLLIDDGQG) is a signal peptide.

This is an uncharacterized protein from Aedes vexans (Inland floodwater mosquito).